Consider the following 93-residue polypeptide: SH3 domain-binding glutamic acid-rich-like protein 3 (93 aa).

At Ser2 the chain carries N-acetylserine. The Glutaredoxin domain occupies 2 to 93 (SGLRVYSTSV…NTLQEFLKLA (92 aa)). Thr9 carries O-linked (GalNAc...) threonine glycosylation.

The protein belongs to the SH3BGR family. In terms of assembly, interacts with MYO1C (via its IQ motifs); the interaction is dependent on calcium and takes place at membrane ruffles. In terms of processing, may be glycosylated. Expressed in heart, liver, lung, kidney, spleen, thymus, ovarian follicles, skeletal muscle, brain, lymph node and mammary epithelial and stromal cells (at protein level).

Its subcellular location is the cytoplasm. It localises to the cytosol. It is found in the cell projection. The protein resides in the ruffle membrane. The protein localises to the nucleus. Could act as a modulator of glutaredoxin biological activity. May play a role in cytoskeleton organization. In Rattus norvegicus (Rat), this protein is SH3 domain-binding glutamic acid-rich-like protein 3.